The sequence spans 87 residues: Sec-independent protein translocase protein TatA (87 aa).

A helical transmembrane segment spans residues 1–21; the sequence is MGGISIWQLLIIALIIVLLFG. The tract at residues 54–87 is disordered; the sequence is NTEADADFEQKTLSKEEQQSEDPVQKSQKDKEQV.

This sequence belongs to the TatA/E family. In terms of assembly, the Tat system comprises two distinct complexes: a TatABC complex, containing multiple copies of TatA, TatB and TatC subunits, and a separate TatA complex, containing only TatA subunits. Substrates initially bind to the TatABC complex, which probably triggers association of the separate TatA complex to form the active translocon.

It localises to the cell inner membrane. Its function is as follows. Part of the twin-arginine translocation (Tat) system that transports large folded proteins containing a characteristic twin-arginine motif in their signal peptide across membranes. TatA could form the protein-conducting channel of the Tat system. The sequence is that of Sec-independent protein translocase protein TatA from Photobacterium profundum (strain SS9).